The sequence spans 184 residues: Ribosome maturation factor RimM (184 aa).

Residues 105 to 184 (EDEFYWRELF…RIEVDWDPAF (80 aa)) enclose the PRC barrel domain.

The protein belongs to the RimM family. Binds ribosomal protein uS19.

It is found in the cytoplasm. An accessory protein needed during the final step in the assembly of 30S ribosomal subunit, possibly for assembly of the head region. Essential for efficient processing of 16S rRNA. May be needed both before and after RbfA during the maturation of 16S rRNA. It has affinity for free ribosomal 30S subunits but not for 70S ribosomes. The protein is Ribosome maturation factor RimM of Vibrio cholerae serotype O1 (strain ATCC 39541 / Classical Ogawa 395 / O395).